The chain runs to 339 residues: uncharacterized protein (339 aa).

This is an uncharacterized protein from Treponema pallidum (strain Nichols).